The chain runs to 185 residues: Ribosome-recycling factor (185 aa).

The tract at residues 140–168 (KKEQKDGNITEDEQRNLEKQVQKITDDST) is disordered.

Belongs to the RRF family.

It localises to the cytoplasm. Its function is as follows. Responsible for the release of ribosomes from messenger RNA at the termination of protein biosynthesis. May increase the efficiency of translation by recycling ribosomes from one round of translation to another. This Lactobacillus helveticus (strain DPC 4571) protein is Ribosome-recycling factor.